Here is a 254-residue protein sequence, read N- to C-terminus: Cell wall biogenesis protein NCW2 (254 aa).

The signal sequence occupies residues 1 to 17 (MKACSILFTTLITLAAA). Disordered stretches follow at residues 19-57 (KDSGSLDGQNSEDSSQKESSNSQEITPTTTKEAQESAST), 111-143 (TSTASVQPTGETSSGITNSASSSTTSTSTDGPV), and 167-191 (ATTDNTASSSKSSSGSSSKPESSTK). Residues 27–42 (QNSEDSSQKESSNSQE) show a composition bias toward low complexity. Over residues 43–57 (ITPTTTKEAQESAST) the composition is skewed to polar residues. Low complexity predominate over residues 111 to 139 (TSTASVQPTGETSSGITNSASSSTTSTST). N-linked (GlcNAc...) asparagine glycosylation is present at Asn229. A lipid anchor (GPI-anchor amidated asparagine) is attached at Asn232. Positions 233–254 (GAFAGTHIAYGAGAFAVGALLL) are cleaved as a propeptide — removed in mature form.

It is found in the cell membrane. Its function is as follows. Cell wall biogenesis protein that participates in the organization of the beta-glucan assembly. Involved in the mechanism responsible for cell tolerance to polyhexamethylene biguanide (PHMB), an antifungal agent. The chain is Cell wall biogenesis protein NCW2 from Saccharomyces cerevisiae (strain ATCC 204508 / S288c) (Baker's yeast).